The following is a 441-amino-acid chain: Argininosuccinate lyase (441 aa).

Belongs to the lyase 1 family. Argininosuccinate lyase subfamily.

It is found in the cytoplasm. The catalysed reaction is 2-(N(omega)-L-arginino)succinate = fumarate + L-arginine. It functions in the pathway amino-acid biosynthesis; L-arginine biosynthesis; L-arginine from L-ornithine and carbamoyl phosphate: step 3/3. In Thermoanaerobacter pseudethanolicus (strain ATCC 33223 / 39E) (Clostridium thermohydrosulfuricum), this protein is Argininosuccinate lyase.